We begin with the raw amino-acid sequence, 257 residues long: Ubiquinone biosynthesis O-methyltransferase (257 aa).

4 residues coordinate S-adenosyl-L-methionine: R43, G77, D98, and M144.

The protein belongs to the methyltransferase superfamily. UbiG/COQ3 family.

The catalysed reaction is a 3-demethylubiquinol + S-adenosyl-L-methionine = a ubiquinol + S-adenosyl-L-homocysteine + H(+). It catalyses the reaction a 3-(all-trans-polyprenyl)benzene-1,2-diol + S-adenosyl-L-methionine = a 2-methoxy-6-(all-trans-polyprenyl)phenol + S-adenosyl-L-homocysteine + H(+). It participates in cofactor biosynthesis; ubiquinone biosynthesis. O-methyltransferase that catalyzes the 2 O-methylation steps in the ubiquinone biosynthetic pathway. The polypeptide is Ubiquinone biosynthesis O-methyltransferase (Psychrobacter cryohalolentis (strain ATCC BAA-1226 / DSM 17306 / VKM B-2378 / K5)).